The primary structure comprises 484 residues: Catalase (484 aa).

The residue at position 53 (methionine 53) is a Methionine sulfone. Catalysis depends on residues histidine 54 and asparagine 127. Residue tyrosine 337 coordinates heme.

As to quaternary structure, homotetramer. Heme serves as cofactor. It depends on NADP(+) as a cofactor.

The protein localises to the cytoplasm. The enzyme catalyses 2 H2O2 = O2 + 2 H2O. Functionally, decomposes hydrogen peroxide into water and oxygen; serves to protect cells from the toxic effects of hydrogen peroxide. The polypeptide is Catalase (katA) (Proteus mirabilis).